Here is a 542-residue protein sequence, read N- to C-terminus: Chaperonin GroEL (542 aa).

Residues threonine 29–proline 32, aspartate 86–threonine 90, glycine 413, asparagine 477–alanine 479, and aspartate 493 each bind ATP.

This sequence belongs to the chaperonin (HSP60) family. Forms a cylinder of 14 subunits composed of two heptameric rings stacked back-to-back. Interacts with the co-chaperonin GroES.

The protein localises to the cytoplasm. It carries out the reaction ATP + H2O + a folded polypeptide = ADP + phosphate + an unfolded polypeptide.. Functionally, together with its co-chaperonin GroES, plays an essential role in assisting protein folding. The GroEL-GroES system forms a nano-cage that allows encapsulation of the non-native substrate proteins and provides a physical environment optimized to promote and accelerate protein folding. The sequence is that of Chaperonin GroEL from Beutenbergia cavernae (strain ATCC BAA-8 / DSM 12333 / CCUG 43141 / JCM 11478 / NBRC 16432 / NCIMB 13614 / HKI 0122).